A 163-amino-acid polypeptide reads, in one-letter code: NF-kappa-B inhibitor-interacting Ras-like protein 2 (163 aa).

The interval 1–163 is small GTPase-like; the sequence is MGKSCKVVIC…SANWNLHPDH (163 aa). 11 to 18 provides a ligand contact to GTP; that stretch reads GQHGVGKT. An Effector region motif is present at residues 35–43; that stretch reads MIETQEDIY. GTP contacts are provided by residues 61–65 and 120–123; these read DTRGL and NKSD.

It belongs to the small GTPase superfamily. Ras family. KappaB-Ras subfamily.

It is found in the cytoplasm. In terms of biological role, atypical Ras-like protein that acts as a potent regulator of NF-kappa-B activity by preventing the degradation of NF-kappa-B inhibitor beta (NFKBIB) by most signals, explaining why NFKBIB is more resistant to degradation. In Xenopus laevis (African clawed frog), this protein is NF-kappa-B inhibitor-interacting Ras-like protein 2 (nkiras2).